Reading from the N-terminus, the 264-residue chain is Diphthine synthase (264 aa).

Residues Leu-10, Asp-87, Val-90, 115-116, Leu-166, Ala-209, and His-234 contribute to the S-adenosyl-L-methionine site; that span reads SI.

It belongs to the diphthine synthase family. Homodimer.

The enzyme catalyses 2-[(3S)-amino-3-carboxypropyl]-L-histidyl-[translation elongation factor 2] + 3 S-adenosyl-L-methionine = diphthine-[translation elongation factor 2] + 3 S-adenosyl-L-homocysteine + 3 H(+). The protein operates within protein modification; peptidyl-diphthamide biosynthesis. Functionally, S-adenosyl-L-methionine-dependent methyltransferase that catalyzes the trimethylation of the amino group of the modified target histidine residue in translation elongation factor 2 (EF-2), to form an intermediate called diphthine. The three successive methylation reactions represent the second step of diphthamide biosynthesis. This Thermococcus kodakarensis (strain ATCC BAA-918 / JCM 12380 / KOD1) (Pyrococcus kodakaraensis (strain KOD1)) protein is Diphthine synthase.